We begin with the raw amino-acid sequence, 193 residues long: uncharacterized protein (193 aa).

Disordered regions lie at residues 1–67 and 110–160; these read MSGP…GPRS and QRTP…LPGS. 2 stretches are compositionally biased toward low complexity: residues 50–64 and 148–160; these read GPQR…ARPG and AGAS…LPGS.

This is an uncharacterized protein from Homo sapiens (Human).